We begin with the raw amino-acid sequence, 415 residues long: Mulatexin (415 aa).

The first 21 residues, 1 to 21 (MKFRTLLIIFSLVFLLEIVSA), serve as a signal peptide directing secretion. The 44-residue stretch at 23-66 (EPQCGRDAGGALCHGNLCCSHWGFCGTTAIYCDVDQGCQSQCWS) folds into the Chitin-binding type-1 1 domain. Disulfide bonds link C26-C41, C35-C47, C40-C54, and C60-C64. Residues 65–127 (WSSPPPPSPP…PGGPERPDHR (63 aa)) are disordered. Positions 67–121 (SPPPPSPPPPPPSPPPPSPPPPSPPPPSPPPPSPPPPSPPPPSPPPPSPPPPGGP) are enriched in pro residues. The region spanning 125-167 (DHRCGRALGNPPCNPGRCCSIHNWCGSTAAYCRGSSCQYQCWN) is the Chitin-binding type-1 2 domain. 4 disulfides stabilise this stretch: C128–C143, C137–C149, C142–C156, and C161–C165. N-linked (GlcNAc...) asparagine glycosylation is present at N264.

In terms of processing, glycosylated.

The protein resides in the secreted. Chitin-binding protein which slows larval growth when consumed by the lepidopteran species S.ricini and M.brassica, but not when consumed by the mulberry specialist B.mori. Lacks chitinase activity. This chain is Mulatexin, found in Morus alba (White mulberry).